A 284-amino-acid polypeptide reads, in one-letter code: Tropomyosin-2 (284 aa).

The stretch at 1–284 (MDAIKKKMQA…DQTFAELTGY (284 aa)) forms a coiled coil. The segment at 82–110 (ESEVATQNRKVQQIEEDLEKSEERSTTAQ) is disordered.

The protein belongs to the tropomyosin family. In terms of assembly, homodimer.

Tropomyosin, in association with the troponin complex, plays a central role in the calcium dependent regulation of muscle contraction. May also regulate motor systems required to maintain nuclear integrity and apico-basal polarity during embryogenesis. This Drosophila melanogaster (Fruit fly) protein is Tropomyosin-2 (Tm2).